The chain runs to 676 residues: Urocanate hydratase (676 aa).

NAD(+) contacts are provided by residues 126-127, Gln204, 251-253, Glu271, 317-318, 343-347, 354-355, and Tyr403; these read GG, GMS, NV, QTSCH, and YY. At Lys534 the chain carries N6-succinyllysine. Residue Gly594 participates in NAD(+) binding.

This sequence belongs to the urocanase family. NAD(+) is required as a cofactor.

The catalysed reaction is 4-imidazolone-5-propanoate = trans-urocanate + H2O. The protein operates within amino-acid degradation; L-histidine degradation into L-glutamate; N-formimidoyl-L-glutamate from L-histidine: step 2/3. The polypeptide is Urocanate hydratase (Uroc1) (Mus musculus (Mouse)).